Reading from the N-terminus, the 226-residue chain is EEF1A lysine methyltransferase 1 (226 aa).

N-acetylserine is present on Ser-2. A Phosphoserine modification is found at Ser-2.

Belongs to the class I-like SAM-binding methyltransferase superfamily. EFM5 family.

It is found in the cytoplasm. The catalysed reaction is L-lysyl-[protein] + 3 S-adenosyl-L-methionine = N(6),N(6),N(6)-trimethyl-L-lysyl-[protein] + 3 S-adenosyl-L-homocysteine + 3 H(+). Protein-lysine methyltransferase that selectively catalyzes the trimethylation of EEF1A at 'Lys-79'. The polypeptide is EEF1A lysine methyltransferase 1 (Bos taurus (Bovine)).